Reading from the N-terminus, the 342-residue chain is Anthranilate phosphoribosyltransferase (342 aa).

5-phospho-alpha-D-ribose 1-diphosphate is bound by residues G84, 87–88 (GD), T92, 94–97 (NIST), 112–120 (KHGGRSVSS), and S124. G84 provides a ligand contact to anthranilate. S96 provides a ligand contact to Mg(2+). Residue R170 participates in anthranilate binding. Residues D229 and E230 each coordinate Mg(2+).

The protein belongs to the anthranilate phosphoribosyltransferase family. As to quaternary structure, homodimer. Mg(2+) is required as a cofactor.

It carries out the reaction N-(5-phospho-beta-D-ribosyl)anthranilate + diphosphate = 5-phospho-alpha-D-ribose 1-diphosphate + anthranilate. Its pathway is amino-acid biosynthesis; L-tryptophan biosynthesis; L-tryptophan from chorismate: step 2/5. Functionally, catalyzes the transfer of the phosphoribosyl group of 5-phosphorylribose-1-pyrophosphate (PRPP) to anthranilate to yield N-(5'-phosphoribosyl)-anthranilate (PRA). The polypeptide is Anthranilate phosphoribosyltransferase (Verminephrobacter eiseniae (strain EF01-2)).